Here is a 237-residue protein sequence, read N- to C-terminus: CDP-diacylglycerol--serine O-phosphatidyltransferase (237 aa).

8 helical membrane-spanning segments follow: residues 3 to 23 (INPLYLFPNLFTASSIFLGMM), 25 to 45 (IFYASSYQFVMACWLVVASLI), 73 to 93 (VIAFGVAPSLIAYFYVGYNFG), 95 to 115 (IGMAVSALFVIFGAIRLARFN), 124 to 144 (YSFIGIPIPAAAVLVVLCVLL), 150 to 170 (FLEGNTEKLFLSFIVLLGVLM), 184 to 204 (WNLKLFILVLIFLSLVFVRPL), and 207 to 227 (LSVFMGLYLIYGIIRWLFLMV).

The protein belongs to the CDP-alcohol phosphatidyltransferase class-I family.

Its subcellular location is the cell membrane. The enzyme catalyses a CDP-1,2-diacyl-sn-glycerol + L-serine = a 1,2-diacyl-sn-glycero-3-phospho-L-serine + CMP + H(+). This Helicobacter pylori (strain ATCC 700392 / 26695) (Campylobacter pylori) protein is CDP-diacylglycerol--serine O-phosphatidyltransferase (pssA).